A 364-amino-acid polypeptide reads, in one-letter code: NAC transcription factor 56 (364 aa).

The segment at Met1 to Phe23 is disordered. Pro residues predominate over residues Gly9–Pro18. One can recognise an NAC domain in the interval Leu17 to Lys178. Residues Val116–His184 mediate DNA binding.

As to expression, stamen specific, in anthers from stage 8. Expressed in the outer integument, but seems not expressed in the embryo at the torpedo stage.

It is found in the nucleus. Its function is as follows. Transcription factor of the NAC family. Together with NAC018/NARS2, regulates embryogenesis by regulating the development and degeneration of ovule integuments, a process required for intertissue communication between the embryo and the maternal integument. The sequence is that of NAC transcription factor 56 from Arabidopsis thaliana (Mouse-ear cress).